Reading from the N-terminus, the 95-residue chain is MLNLLCAVYKSSKKADTYLYVPGRDDFSRVPESLMKMFGAPRFIMIMPIKKDRTLGQVDIQTLRDELTKNGFYLQLPPPEENLLKQHLAAQSPKD.

One can recognise a YcgL domain in the interval 4–88; the sequence is LLCAVYKSSK…PEENLLKQHL (85 aa).

In Pseudoalteromonas atlantica (strain T6c / ATCC BAA-1087), this protein is YcgL domain-containing protein Patl_2802.